The following is a 78-amino-acid chain: Acyl carrier protein (78 aa).

The 76-residue stretch at 2–77 (STIEERVKKI…AAIDYIEAAN (76 aa)) folds into the Carrier domain. An O-(pantetheine 4'-phosphoryl)serine modification is found at S37.

It belongs to the acyl carrier protein (ACP) family. Post-translationally, 4'-phosphopantetheine is transferred from CoA to a specific serine of apo-ACP by AcpS. This modification is essential for activity because fatty acids are bound in thioester linkage to the sulfhydryl of the prosthetic group.

Its subcellular location is the cytoplasm. It participates in lipid metabolism; fatty acid biosynthesis. Carrier of the growing fatty acid chain in fatty acid biosynthesis. In Edwardsiella ictaluri (strain 93-146), this protein is Acyl carrier protein.